The chain runs to 286 residues: 4-diphosphocytidyl-2-C-methyl-D-erythritol kinase (286 aa).

Lys-13 is a catalytic residue. 99–109 is an ATP binding site; the sequence is PMGGGLGGGSS. The active site involves Asp-141.

Belongs to the GHMP kinase family. IspE subfamily.

It catalyses the reaction 4-CDP-2-C-methyl-D-erythritol + ATP = 4-CDP-2-C-methyl-D-erythritol 2-phosphate + ADP + H(+). Its pathway is isoprenoid biosynthesis; isopentenyl diphosphate biosynthesis via DXP pathway; isopentenyl diphosphate from 1-deoxy-D-xylulose 5-phosphate: step 3/6. Catalyzes the phosphorylation of the position 2 hydroxy group of 4-diphosphocytidyl-2C-methyl-D-erythritol. This chain is 4-diphosphocytidyl-2-C-methyl-D-erythritol kinase, found in Herminiimonas arsenicoxydans.